The primary structure comprises 156 residues: Small ribosomal subunit protein uS7 (156 aa).

The protein belongs to the universal ribosomal protein uS7 family. As to quaternary structure, part of the 30S ribosomal subunit. Contacts proteins S9 and S11.

One of the primary rRNA binding proteins, it binds directly to 16S rRNA where it nucleates assembly of the head domain of the 30S subunit. Is located at the subunit interface close to the decoding center, probably blocks exit of the E-site tRNA. This is Small ribosomal subunit protein uS7 from Thermoanaerobacter pseudethanolicus (strain ATCC 33223 / 39E) (Clostridium thermohydrosulfuricum).